The following is a 1526-amino-acid chain: uncharacterized protein (1526 aa).

16 WD repeats span residues 334-376 (CTKE…EHIS), 862-901 (KILGSVLTVAFSPDGKLFATGDSGGIVRFWEAATGKELLT), 904-945 (GHNS…KTFK), 946-985 (GHTSRVRSVVFSPNSLMLASGSSDQTVRLWDISSGECLYI), 988-1027 (GHTGWVYSVAFNLDGSMLATGSGDQTVRLWDISSSQCFYI), 1030-1069 (GHTSCVRSVVFSSDGAMLASGSDDQTVRLWDISSGNCLYT), 1072-1111 (GHTSCVRSVVFSPDGAMLASGGDDQIVRLWDISSGNCLYT), 1114-1153 (GYTSWVRFLVFSPNGVTLANGSSDQIVRLWDISSKKCLYT), 1156-1195 (GHTNWVNAVAFSPDGATLASGSGDQTVRLWDISSSKCLYI), 1198-1237 (GHTSWVNSVVFNPDGSTLASGSSDQTVRLWEINSSKCLCT), 1240-1279 (GHTSWVNSVVFNPDGSMLASGSSDKTVRLWDISSSKCLHT), 1282-1321 (GHTNWVNSVAFNPDGSMLASGSGDQTVRLWEISSSKCLHT), 1324-1363 (GHTSWVSSVTFSPDGTMLASGSDDQTVRLWSISSGECLYT), 1366-1405 (GHTNWVGSVIFSPDGAILASGSGDQTVRLWSISSGKCLYT), 1408-1447 (GHNNWVGSIVFSPDGTLLASGSDDQTVRLWNISSGECLYT), and 1450-1491 (GHIN…KTLK). The 40-residue stretch at 823–862 (MVLEGRDLSHTVIIGADFTNTSLRCVNFTEANLAYSVFTK) folds into the Pentapeptide repeat domain.

This is an uncharacterized protein from Nostoc sp. (strain PCC 7120 / SAG 25.82 / UTEX 2576).